Here is a 743-residue protein sequence, read N- to C-terminus: Elongation factor 2 (743 aa).

Residues 19 to 265 (NNIRNIGIIA…MVVRHLPSPK (247 aa)) form the tr-type G domain. Residues 28 to 35 (AHIHHGKT), 94 to 98 (DTPGH), and 148 to 151 (NKVD) each bind GTP. A Diphthamide modification is found at H615.

This sequence belongs to the TRAFAC class translation factor GTPase superfamily. Classic translation factor GTPase family. EF-G/EF-2 subfamily.

The protein resides in the cytoplasm. Functionally, catalyzes the GTP-dependent ribosomal translocation step during translation elongation. During this step, the ribosome changes from the pre-translocational (PRE) to the post-translocational (POST) state as the newly formed A-site-bound peptidyl-tRNA and P-site-bound deacylated tRNA move to the P and E sites, respectively. Catalyzes the coordinated movement of the two tRNA molecules, the mRNA and conformational changes in the ribosome. The protein is Elongation factor 2 of Nanoarchaeum equitans (strain Kin4-M).